The primary structure comprises 260 residues: UPF0246 protein Bcenmc03_2247 (260 aa).

This sequence belongs to the UPF0246 family.

This chain is UPF0246 protein Bcenmc03_2247, found in Burkholderia orbicola (strain MC0-3).